We begin with the raw amino-acid sequence, 318 residues long: Ribokinase (318 aa).

Substrate contacts are provided by residues Asn-12 to Asp-14, Gly-40 to Asn-44, and Glu-141. ATP is bound by residues Asn-188 and Thr-235–Gly-240. Positions 264 and 266 each coordinate K(+). Position 269-270 (Gly-269–Asp-270) interacts with ATP. A substrate-binding site is contributed by Asp-270. Asp-270 (proton acceptor) is an active-site residue. Residues Ser-301, Arg-304, Gly-306, and Ser-310 each contribute to the K(+) site.

The protein belongs to the carbohydrate kinase PfkB family. Ribokinase subfamily. Homodimer. Mg(2+) serves as cofactor.

The protein localises to the cytoplasm. It is found in the nucleus. The catalysed reaction is D-ribose + ATP = D-ribose 5-phosphate + ADP + H(+). Its pathway is carbohydrate metabolism; D-ribose degradation; D-ribose 5-phosphate from beta-D-ribopyranose: step 2/2. Its activity is regulated as follows. Activated by a monovalent cation that binds near, but not in, the active site. The most likely occupant of the site in vivo is potassium. Ion binding induces a conformational change that may alter substrate affinity. Functionally, catalyzes the phosphorylation of ribose at O-5 in a reaction requiring ATP and magnesium. The resulting D-ribose-5-phosphate can then be used either for sythesis of nucleotides, histidine, and tryptophan, or as a component of the pentose phosphate pathway. The chain is Ribokinase (rbsk) from Dictyostelium discoideum (Social amoeba).